The sequence spans 61 residues: uncharacterized protein (61 aa).

The signal sequence occupies residues 1 to 28 (MHRRARRMPMRPRRSKRVRNRYTMGTFA).

This is an uncharacterized protein from Mycobacterium tuberculosis (strain ATCC 25618 / H37Rv).